The primary structure comprises 218 residues: Histidine biosynthesis bifunctional protein HisIE (218 aa).

Positions 1 to 118 are phosphoribosyl-AMP cyclohydrolase; sequence MTDLSELNFD…DAPDTGLDGT (118 aa). A phosphoribosyl-ATP pyrophosphohydrolase region spans residues 119–218; the sequence is LERVYATITE…SGLKGPKEVG (100 aa).

In the N-terminal section; belongs to the PRA-CH family. The protein in the C-terminal section; belongs to the PRA-PH family.

It localises to the cytoplasm. It catalyses the reaction 1-(5-phospho-beta-D-ribosyl)-ATP + H2O = 1-(5-phospho-beta-D-ribosyl)-5'-AMP + diphosphate + H(+). The catalysed reaction is 1-(5-phospho-beta-D-ribosyl)-5'-AMP + H2O = 1-(5-phospho-beta-D-ribosyl)-5-[(5-phospho-beta-D-ribosylamino)methylideneamino]imidazole-4-carboxamide. Its pathway is amino-acid biosynthesis; L-histidine biosynthesis; L-histidine from 5-phospho-alpha-D-ribose 1-diphosphate: step 2/9. The protein operates within amino-acid biosynthesis; L-histidine biosynthesis; L-histidine from 5-phospho-alpha-D-ribose 1-diphosphate: step 3/9. The protein is Histidine biosynthesis bifunctional protein HisIE (hisI) of Deinococcus radiodurans (strain ATCC 13939 / DSM 20539 / JCM 16871 / CCUG 27074 / LMG 4051 / NBRC 15346 / NCIMB 9279 / VKM B-1422 / R1).